A 429-amino-acid polypeptide reads, in one-letter code: Ribosomal RNA small subunit methyltransferase B (429 aa).

S-adenosyl-L-methionine contacts are provided by residues 254-260 (CSAPGGK), D277, D303, and D322. C375 serves as the catalytic Nucleophile. The disordered stretch occupies residues 397–419 (ALSETGTPDQPGQQNLPGGEEGD). A compositionally biased stretch (polar residues) spans 400 to 412 (ETGTPDQPGQQNL).

It belongs to the class I-like SAM-binding methyltransferase superfamily. RsmB/NOP family.

The protein resides in the cytoplasm. The catalysed reaction is cytidine(967) in 16S rRNA + S-adenosyl-L-methionine = 5-methylcytidine(967) in 16S rRNA + S-adenosyl-L-homocysteine + H(+). Functionally, specifically methylates the cytosine at position 967 (m5C967) of 16S rRNA. The chain is Ribosomal RNA small subunit methyltransferase B from Salmonella dublin (strain CT_02021853).